We begin with the raw amino-acid sequence, 159 residues long: Ribosomal RNA large subunit methyltransferase H (159 aa).

Residues Leu-76, Gly-108, and 127 to 132 (FSKMTF) each bind S-adenosyl-L-methionine.

The protein belongs to the RNA methyltransferase RlmH family. In terms of assembly, homodimer.

Its subcellular location is the cytoplasm. The catalysed reaction is pseudouridine(1915) in 23S rRNA + S-adenosyl-L-methionine = N(3)-methylpseudouridine(1915) in 23S rRNA + S-adenosyl-L-homocysteine + H(+). Functionally, specifically methylates the pseudouridine at position 1915 (m3Psi1915) in 23S rRNA. The protein is Ribosomal RNA large subunit methyltransferase H of Exiguobacterium sp. (strain ATCC BAA-1283 / AT1b).